We begin with the raw amino-acid sequence, 521 residues long: GMP synthase [glutamine-hydrolyzing] (521 aa).

The 199-residue stretch at Lys5–Asp203 folds into the Glutamine amidotransferase type-1 domain. The active-site Nucleophile is the Cys82. Catalysis depends on residues His177 and Glu179. The GMPS ATP-PPase domain occupies Trp204 to Arg396. Ser231 to Ser237 contributes to the ATP binding site.

In terms of assembly, homodimer.

It carries out the reaction XMP + L-glutamine + ATP + H2O = GMP + L-glutamate + AMP + diphosphate + 2 H(+). It participates in purine metabolism; GMP biosynthesis; GMP from XMP (L-Gln route): step 1/1. Catalyzes the synthesis of GMP from XMP. The protein is GMP synthase [glutamine-hydrolyzing] of Aromatoleum aromaticum (strain DSM 19018 / LMG 30748 / EbN1) (Azoarcus sp. (strain EbN1)).